The sequence spans 211 residues: DNA/RNA-binding protein ALBA2 (211 aa).

The segment covering 84-99 (NSGLKKNAKNEDKKSG) has biased composition (basic and acidic residues). Residues 84–121 (NSGLKKNAKNEDKKSGDEEEEEEEEEEDEENNKNKEAN) form a disordered region. Positions 100–113 (DEEEEEEEEEEDEE) are enriched in acidic residues.

The protein belongs to the histone-like Alba family. In terms of assembly, identified in a TARE6-associated complex consisting of over 30 proteins and including ALBA1, ALBA2 and ALBA4; the complex binds to the non-coding subtelomeric repeat region TARE6.

The protein resides in the nucleus. It localises to the chromosome. The protein localises to the telomere. Its subcellular location is the cytoplasm. In terms of biological role, possesses DNA- and RNA-binding activities. Binds to DNA with relaxed sequence specificity. Associates with the subtelomeric TARE6 repeats. The sequence is that of DNA/RNA-binding protein ALBA2 from Plasmodium falciparum (isolate 3D7).